A 415-amino-acid chain; its full sequence is Dynein assembly factor with WD repeat domains 1 (415 aa).

8 WD repeats span residues Ala-90–Thr-129, Gly-132–Arg-174, Gly-175–Thr-214, Gly-217–Thr-256, Gly-259–Thr-298, Gly-301–Lys-340, Gly-343–Glu-384, and His-386–Arg-415.

Belongs to the WD repeat WDR69 family. As to quaternary structure, interacts with IFT46. As to expression, in early mouse embryos, expression is limited to distal, motile ciliated cells of the node.

The protein localises to the cytoplasm. It is found in the cytoskeleton. Its subcellular location is the flagellum basal body. It localises to the flagellum axoneme. Required for axonemal dynein assembly and ciliary motility in ciliated organs, including Kupffer's vesicle, during embryogenesis. Facilitates the onset of robust cilia motility during development. This Mus musculus (Mouse) protein is Dynein assembly factor with WD repeat domains 1.